The following is a 443-amino-acid chain: Histidinol dehydrogenase (443 aa).

3 residues coordinate NAD(+): Y141, Q203, and N226. S249, Q271, and H274 together coordinate substrate. Residues Q271 and H274 each coordinate Zn(2+). Residues E339 and H340 each act as proton acceptor in the active site. Positions 340, 373, 427, and 432 each coordinate substrate. D373 provides a ligand contact to Zn(2+). A Zn(2+)-binding site is contributed by H432.

The protein belongs to the histidinol dehydrogenase family. Zn(2+) serves as cofactor.

The catalysed reaction is L-histidinol + 2 NAD(+) + H2O = L-histidine + 2 NADH + 3 H(+). It functions in the pathway amino-acid biosynthesis; L-histidine biosynthesis; L-histidine from 5-phospho-alpha-D-ribose 1-diphosphate: step 9/9. Catalyzes the sequential NAD-dependent oxidations of L-histidinol to L-histidinaldehyde and then to L-histidine. The polypeptide is Histidinol dehydrogenase (Chlorobium luteolum (strain DSM 273 / BCRC 81028 / 2530) (Pelodictyon luteolum)).